The sequence spans 469 residues: Histone acetyltransferase ESA1 (469 aa).

The interval 1-26 (MALAEADLPNGKTNGKASGSEETPAP) is disordered. Residues 11 to 21 (GKTNGKASGSE) are compositionally biased toward polar residues. In terms of domain architecture, Tudor-knot spans 39 to 92 (LRVGCKVHVEKDGEDRVAEILSVQMRRGNLEFYVHYVEFNKRLDERIAATRVDL). The tract at residues 98 to 163 (WPEPEKPKKP…GTTQDPDNFN (66 aa)) is disordered. A compositionally biased stretch (basic residues) spans 118–127 (EKKKNPSKKQ). Polar residues-rich tracts occupy residues 130 to 139 (TDSAATTPGA) and 150 to 160 (LQVNGTTQDPD). The MYST-type HAT domain occupies 185 to 457 (ARVRNLQRIV…VNSELLKWKP (273 aa)). The segment at 218-243 (IYICDFTLCYFGSKKQFERFRSKSTL) adopts a C2HC MYST-type; degenerate zinc-finger fold. At lysine 285 the chain carries N6-acetyllysine; by autocatalysis. Residues 326-330 (ACILT) and 335-341 (QRHGYGR) each bind acetyl-CoA. Glutamate 361 functions as the Proton donor/acceptor in the catalytic mechanism. Serine 365 contacts acetyl-CoA.

It belongs to the MYST (SAS/MOZ) family. In terms of assembly, component of the NuA4 histone acetyltransferase complex. Autoacetylation at Lys-285 is required for proper function.

It is found in the nucleus. Its subcellular location is the chromosome. The enzyme catalyses L-lysyl-[histone] + acetyl-CoA = N(6)-acetyl-L-lysyl-[histone] + CoA + H(+). It carries out the reaction L-lysyl-[protein] + acetyl-CoA = N(6)-acetyl-L-lysyl-[protein] + CoA + H(+). It catalyses the reaction 2-hydroxyisobutanoyl-CoA + L-lysyl-[protein] = N(6)-(2-hydroxyisobutanoyl)-L-lysyl-[protein] + CoA + H(+). The catalysed reaction is (2E)-butenoyl-CoA + L-lysyl-[protein] = N(6)-(2E)-butenoyl-L-lysyl-[protein] + CoA + H(+). Functionally, catalytic component of the NuA4 histone acetyltransferase (HAT) complex which is involved in epigenetic transcriptional activation of selected genes principally by acetylation of nucleosomal histones H4, H3, H2B, H2A and H2A variant H2A.Z. Acetylates histone H4 to form H4K5ac, H4K8ac, H4K12ac and H4K16ac, histone H3 to form H3K14ac, and histone H2A to form H2AK4ac and H2AK7ac. The NuA4 complex is involved in the DNA damage response and is required for chromosome segregation. The NuA4 complex plays a direct role in repair of DNA double-strand breaks (DSBs) through homologous recombination. Recruitment to promoters depends on H3K4me. Also acetylates non-histone proteins. In addition to protein acetyltransferase, can use different acyl-CoA substrates, such as 2-hydroxyisobutanoyl-CoA (2-hydroxyisobutyryl-CoA) or (2E)-butenoyl-CoA (crotonyl-CoA), and is able to mediate protein 2-hydroxyisobutyrylation and crotonylation, respectively. In Yarrowia lipolytica (strain CLIB 122 / E 150) (Yeast), this protein is Histone acetyltransferase ESA1 (ESA1).